The primary structure comprises 60 residues: Temporin-CG2 (60 aa).

Residues 1-22 (MFTLKKPLLVLFFLATINLSLC) form the signal peptide. The propeptide at 23 to 43 (EQERNAEEERRDDDERNVEVE) is removed in mature form.

As to expression, expressed by the skin glands.

It localises to the secreted. Its function is as follows. Antimicrobial peptide active against a variety of Gram-positive bacterial strains but not against Gram-negative bacteria. Has weak antifungal activity against a slime mold isolate. Has weak hemolytic activity against human erythrocytes. The protein is Temporin-CG2 of Amolops chunganensis (Chungan torrent frog).